A 2845-amino-acid chain; its full sequence is Multiple epidermal growth factor-like domains protein 8 (2845 aa).

Residues 1–27 (MALGKVLAMALVLALAVLGSLSPGARA) form the signal peptide. The Extracellular segment spans residues 28 to 2647 (GDCKGQRQVL…FFRQDQAHID (2620 aa)). 6 cysteine pairs are disulfide-bonded: Cys30–Cys57, Cys142–Cys152, Cys146–Cys158, Cys174–Cys184, Cys178–Cys191, and Cys193–Cys202. The region spanning 30-140 (CKGQRQVLRE…LGFNASFRFS (111 aa)) is the CUB 1 domain. N-linked (GlcNAc...) asparagine glycosylation occurs at Asn50. EGF-like domains are found at residues 138 to 168 (RFSLCPGGCQSHGQCQPPGVCACEPGWGGPD) and 170 to 203 (GLQECSAYCGSHGTCASPLGPCRCEPGFLGRACD). Residue Asn217 is glycosylated (N-linked (GlcNAc...) asparagine). Kelch repeat units follow at residues 241-287 (LLAV…AVAW), 290-338 (SLVL…AGHA), 346-399 (WLYV…FHAP), 402-453 (ALLV…FHTA), 459-511 (YMVV…APPS), and 525-575 (VLLV…SRDP). 3 consecutive PSI domains span residues 561–613 (YCSM…GDCQ), 847–899 (SCTS…TLCP), and 900–947 (LCEE…EECP). N-linked (GlcNAc...) asparagine glycosylation is present at Asn1048. An EGF-like 3; calcium-binding domain is found at 1074-1115 (DVDECRLGLARCHPRATCLNTPLSYECHCQRGYQGDGISHCN). Intrachain disulfides connect Cys1078–Cys1091, Cys1085–Cys1100, Cys1102–Cys1114, Cys1163–Cys1171, Cys1165–Cys1179, Cys1182–Cys1191, Cys1194–Cys1208, Cys1211–Cys1224, Cys1213–Cys1231, Cys1233–Cys1242, Cys1245–Cys1259, Cys1263–Cys1302, Cys1336–Cys1367, Cys1407–Cys1421, Cys1415–Cys1433, and Cys1435–Cys1444. 2 Laminin EGF-like domains span residues 1163-1210 (CGCS…GCRP) and 1211-1261 (CQCN…SCFR). Positions 1263–1405 (CGGRALLTNV…WGFNASVGSA (143 aa)) constitute a CUB 2 domain. Asn1271 carries N-linked (GlcNAc...) asparagine glycosylation. Thr1353 bears the Phosphothreonine mark. The 43-residue stretch at 1403–1445 (GSARCGSGGPGSCPVPQECVPQDGAAGAGLCRCPQGWAGPHCR) folds into the EGF-like 4 domain. Kelch repeat units follow at residues 1522-1570 (TLWM…SFHA), 1580-1626 (AMYL…HTLT), 1632-1679 (SLLL…SAVY), 1685-1735 (SLYV…VRGS), 1796-1843 (TMVV…ESVA), and 1852-1898 (RLYI…CHGA). The segment at 1726 to 1745 (RDRMRNVRGSSRGLGQVPGE) is disordered. 4 PSI domains span residues 1876-1916 (PCRL…SPCS), 1924-1979 (ECRR…NDCR), 2060-2118 (PCHL…ESCS), and 2120-2177 (GCAQ…LSCP). An N-linked (GlcNAc...) asparagine glycan is attached at Asn2066. The 39-residue stretch at 2178-2216 (PEDECANGHHDCNETQNCHDQPHGYECSCKTGYTMDNMT) folds into the EGF-like 5 domain. Cystine bridges form between Cys2182/Cys2195 and Cys2189/Cys2204. N-linked (GlcNAc...) asparagine glycosylation is present at Asn2229. Disulfide bonds link Cys2253/Cys2261, Cys2255/Cys2270, Cys2273/Cys2282, Cys2285/Cys2299, Cys2380/Cys2389, Cys2382/Cys2397, Cys2399/Cys2424, and Cys2427/Cys2441. 2 consecutive Laminin EGF-like domains span residues 2253–2301 (CRCN…TCRP) and 2380–2443 (CQCN…QCYR). A disordered region spans residues 2523-2564 (TVHIQPPPAPPPPPPPADGGPRGAGDPGGAGASSGPGAPAEP). Positions 2527–2540 (QPPPAPPPPPPPAD) are enriched in pro residues. Over residues 2542–2556 (GPRGAGDPGGAGASS) the composition is skewed to gly residues. Residues 2648–2668 (LFVFFSVFFSCFFLFLSLCVL) form a helical membrane-spanning segment. The Cytoplasmic segment spans residues 2669–2845 (LWKAKQALDQ…SQDNLTSMSL (177 aa)). Residues 2817 to 2831 (GGGAGGSGHGTGAGR) are compositionally biased toward gly residues. A disordered region spans residues 2817 to 2845 (GGGAGGSGHGTGAGRKGLLSQDNLTSMSL). Residues 2836-2845 (SQDNLTSMSL) show a composition bias toward polar residues.

The protein resides in the membrane. Functionally, acts as a negative regulator of hedgehog signaling. The polypeptide is Multiple epidermal growth factor-like domains protein 8 (MEGF8) (Homo sapiens (Human)).